A 140-amino-acid polypeptide reads, in one-letter code: MGNRRLAREHALQTLYYADTGKTQGKDINEYKEDFKDSLDAAGFEFCSGIIDGALEHQAELDKIISAYAKNWSLNRMSVVDRSILRMAAYEMLFSPENTPVAAVIDEAIELAKKFSTENSSRFINGLLDQIKKERKNGQN.

The protein belongs to the NusB family.

Functionally, involved in transcription antitermination. Required for transcription of ribosomal RNA (rRNA) genes. Binds specifically to the boxA antiterminator sequence of the ribosomal RNA (rrn) operons. The sequence is that of Transcription antitermination protein NusB from Elusimicrobium minutum (strain Pei191).